Consider the following 471-residue polypeptide: Argininosuccinate lyase (471 aa).

The protein belongs to the lyase 1 family. Argininosuccinate lyase subfamily.

The protein resides in the cytoplasm. It carries out the reaction 2-(N(omega)-L-arginino)succinate = fumarate + L-arginine. It functions in the pathway amino-acid biosynthesis; L-arginine biosynthesis; L-arginine from L-ornithine and carbamoyl phosphate: step 3/3. The sequence is that of Argininosuccinate lyase from Deinococcus radiodurans (strain ATCC 13939 / DSM 20539 / JCM 16871 / CCUG 27074 / LMG 4051 / NBRC 15346 / NCIMB 9279 / VKM B-1422 / R1).